A 279-amino-acid chain; its full sequence is 2-dehydro-3-deoxyphosphooctonate aldolase (279 aa).

It belongs to the KdsA family.

Its subcellular location is the cytoplasm. It catalyses the reaction D-arabinose 5-phosphate + phosphoenolpyruvate + H2O = 3-deoxy-alpha-D-manno-2-octulosonate-8-phosphate + phosphate. Its pathway is carbohydrate biosynthesis; 3-deoxy-D-manno-octulosonate biosynthesis; 3-deoxy-D-manno-octulosonate from D-ribulose 5-phosphate: step 2/3. The protein operates within bacterial outer membrane biogenesis; lipopolysaccharide biosynthesis. The chain is 2-dehydro-3-deoxyphosphooctonate aldolase from Azoarcus sp. (strain BH72).